We begin with the raw amino-acid sequence, 297 residues long: Mitochondrial ornithine transporter 1 (297 aa).

3 Solcar repeats span residues glycine 15–threonine 97, aspartate 102–asparagine 205, and lysine 212–threonine 292. 6 consecutive transmembrane segments (helical) span residues alanine 18–leucine 38, glycine 72–tyrosine 91, tyrosine 107–tyrosine 127, histidine 184–lysine 204, phenylalanine 215–valine 235, and isoleucine 264–leucine 285.

Belongs to the mitochondrial carrier (TC 2.A.29) family.

It is found in the mitochondrion inner membrane. Its function is as follows. Required for arginine biosynthesis. Transports ornithine synthesized from glutamate in the mitochondrial matrix to the cytosol, where it is converted to arginine. This is Mitochondrial ornithine transporter 1 from Schizosaccharomyces pombe (strain 972 / ATCC 24843) (Fission yeast).